The sequence spans 98 residues: NADH-ubiquinone oxidoreductase chain 4L (98 aa).

The next 3 membrane-spanning stretches (helical) occupy residues 1 to 21 (MSMV…GLLM), 29 to 49 (SLLC…MTIL), and 61 to 81 (IILL…LVMV).

It belongs to the complex I subunit 4L family. Core subunit of respiratory chain NADH dehydrogenase (Complex I) which is composed of 45 different subunits.

Its subcellular location is the mitochondrion inner membrane. The catalysed reaction is a ubiquinone + NADH + 5 H(+)(in) = a ubiquinol + NAD(+) + 4 H(+)(out). Core subunit of the mitochondrial membrane respiratory chain NADH dehydrogenase (Complex I) which catalyzes electron transfer from NADH through the respiratory chain, using ubiquinone as an electron acceptor. Part of the enzyme membrane arm which is embedded in the lipid bilayer and involved in proton translocation. This Phocarctos hookeri (Hooker's sea lion) protein is NADH-ubiquinone oxidoreductase chain 4L (MT-ND4L).